A 124-amino-acid chain; its full sequence is MATVNQLVRKPRKRKVAKSDVPALQACPQRRGVCTRVYTTTPKKPNSALRKVCRVRLTNGFEVTSYIGGEGHNLQEHSVVLIRGGRVKDLPGVRYHTVRGSLDTSGVQNRKQGRSKYGTKRPKK.

A disordered region spans residues 1 to 22 (MATVNQLVRKPRKRKVAKSDVP). Asp89 carries the 3-methylthioaspartic acid modification. The tract at residues 99-124 (RGSLDTSGVQNRKQGRSKYGTKRPKK) is disordered. The span at 111–124 (KQGRSKYGTKRPKK) shows a compositional bias: basic residues.

It belongs to the universal ribosomal protein uS12 family. As to quaternary structure, part of the 30S ribosomal subunit. Contacts proteins S8 and S17. May interact with IF1 in the 30S initiation complex.

Its function is as follows. With S4 and S5 plays an important role in translational accuracy. In terms of biological role, interacts with and stabilizes bases of the 16S rRNA that are involved in tRNA selection in the A site and with the mRNA backbone. Located at the interface of the 30S and 50S subunits, it traverses the body of the 30S subunit contacting proteins on the other side and probably holding the rRNA structure together. The combined cluster of proteins S8, S12 and S17 appears to hold together the shoulder and platform of the 30S subunit. This chain is Small ribosomal subunit protein uS12, found in Marinomonas sp. (strain MWYL1).